The sequence spans 24 residues: Pyruvate kinase (24 aa).

The protein belongs to the pyruvate kinase family. Homotetramer. The cofactor is Mg(2+). Requires K(+) as cofactor.

The catalysed reaction is pyruvate + ATP = phosphoenolpyruvate + ADP + H(+). Its pathway is carbohydrate degradation; glycolysis; pyruvate from D-glyceraldehyde 3-phosphate: step 5/5. This is Pyruvate kinase (pyk) from Clostridium pasteurianum.